Reading from the N-terminus, the 360-residue chain is Peptide chain release factor 1 (360 aa).

Glutamine 235 is subject to N5-methylglutamine. Positions 285–295 (RQAAEQTDMRR) are enriched in basic and acidic residues. Positions 285-309 (RQAAEQTDMRRNLLGSGDRSDKIRT) are disordered.

Belongs to the prokaryotic/mitochondrial release factor family. Methylated by PrmC. Methylation increases the termination efficiency of RF1.

It is found in the cytoplasm. Its function is as follows. Peptide chain release factor 1 directs the termination of translation in response to the peptide chain termination codons UAG and UAA. The chain is Peptide chain release factor 1 from Haemophilus influenzae (strain 86-028NP).